The following is a 470-amino-acid chain: Poly(A) polymerase catalytic subunit (470 aa).

Residues aspartate 192 and aspartate 194 contribute to the active site.

Belongs to the poxviridae poly(A) polymerase catalytic subunit family. Heterodimer of a large (catalytic) subunit and a small (regulatory) subunit.

It catalyses the reaction RNA(n) + ATP = RNA(n)-3'-adenine ribonucleotide + diphosphate. Functionally, polymerase that creates the 3'-poly(A) tail of mRNA's. The protein is Poly(A) polymerase catalytic subunit (PAPL) of Deerpox virus (strain Mule deer/United States/W-848-83/1983) (DPV).